Here is a 533-residue protein sequence, read N- to C-terminus: Glucose-6-phosphate isomerase (533 aa).

Glu341 functions as the Proton donor in the catalytic mechanism. Residues His372 and Lys501 contribute to the active site.

Belongs to the GPI family.

It is found in the cytoplasm. The catalysed reaction is alpha-D-glucose 6-phosphate = beta-D-fructose 6-phosphate. Its pathway is carbohydrate biosynthesis; gluconeogenesis. The protein operates within carbohydrate degradation; glycolysis; D-glyceraldehyde 3-phosphate and glycerone phosphate from D-glucose: step 2/4. Its function is as follows. Catalyzes the reversible isomerization of glucose-6-phosphate to fructose-6-phosphate. In Cereibacter sphaeroides (strain ATCC 17025 / ATH 2.4.3) (Rhodobacter sphaeroides), this protein is Glucose-6-phosphate isomerase.